A 31-amino-acid polypeptide reads, in one-letter code: GCIATGSFCTLSKGCCTKNCGWNFHCNPPNQ.

3 disulfides stabilise this stretch: Cys2–Cys16, Cys9–Cys20, and Cys15–Cys26. Residues Pro28 and Pro29 each carry the 4-hydroxyproline modification.

This sequence belongs to the nemertide family. As to expression, confined to the epidermis and to the mucus layer.

The protein localises to the secreted. Its function is as follows. Highly potent toxin against both insect and some mammalian sodium channels (Nav). It potently inhibits inactivation of insect sodium channels of B.germanica (BgNav1) (EC(50)=7.8 nM) and also delays the inactivation of mammalian Nav with potent activity on Nav1.3/SCN3A and Nav1.4/SCN4A (hNav1.1/SCN1A; EC(50)=102.1 nM, rNav1.2/SCN2A; EC(50)=156.1 nM, rNav1.3/SCN3A; EC(50)=9.4 nM, rNav1.4/SCN4A; EC(50)=15.4 nM, hNav1.5/SCN5A; EC(50)=132.7 nM, mNav1.6/SCN8A; EC(50)=66.9 nM, hNav1.9/SCN9A; EC(50)=73 nM). 1 uM is enough to completely inhibits the inactivation, resulting in sustained non-inactivating currents. In addition, the toxin significantly enhances the recovery from inactivation, and the open state is not required for the toxin to interact with the channel. In vivo, injection into brine shrimp (Artemia salina) stops movement or causes death after 24 hours (EC(50)=0.4 uM). This is Nemertide alpha-5 from Ramphogordius pseudolacteus (Ribbon worm).